Reading from the N-terminus, the 549-residue chain is MKNINPTQTSAWQALQKHYDEMKDVTIAELFANDSDRFAKFSATFDDLMLVDFSKNRITEETLAKLQDLAKETDLAGAIKSMFSGEKINRTEDRAVLHVALRNRSNTPIIVDGKDVMPEVNAVLEKMKTFSQAIISGQWKGYTGKAITDVVNIGIGGSDLGPFMVTEALRPYKNHLTMHFVSNVDGTHIAEVLKKVNPETTLFLVASKTFTTQETMTNAHSARDWFLKSAGDEKHVAKHFAALSTNAKAVGEFGIDTANMFEFWDWVGGRYSLWSAIGLSIILSVGFDNFVELLSGAHAMDKHFSTTPAEKNLPILLALIGIWYNNFFGAETEAILPYDQYMHRFAAYFQQGNMESNGKYVDRNGNAVDYQTGPIIWGEPGTNGQHAFYQLIHQGTKMVPCDFIAPAITHNPLSDHHQKLLSNFFAQTEALAFGKSREVVEQEYRDQGKDPAQLEHVVPFKVFEGNRPTNSILLREITPFSLGALIALYEHKIFTQGVILNIFTFDQWGVELGKQLANRILPELGDDKAISSHDSSTNGLINRYKAWRA.

The active-site Proton donor is the Glu355. Residues His386 and Lys514 contribute to the active site.

It belongs to the GPI family.

The protein localises to the cytoplasm. It carries out the reaction alpha-D-glucose 6-phosphate = beta-D-fructose 6-phosphate. It functions in the pathway carbohydrate biosynthesis; gluconeogenesis. It participates in carbohydrate degradation; glycolysis; D-glyceraldehyde 3-phosphate and glycerone phosphate from D-glucose: step 2/4. Catalyzes the reversible isomerization of glucose-6-phosphate to fructose-6-phosphate. The polypeptide is Glucose-6-phosphate isomerase (Salmonella typhi).